We begin with the raw amino-acid sequence, 404 residues long: Magnesium transporter NIPA4 (404 aa).

The Extracellular portion of the chain corresponds to 1-55 (MELRVSNTSCENGSLLHLYCSSQEVLCQIVNDLSPEVPSNATFHSWQERIRQNYG). N7, N12, and N40 each carry an N-linked (GlcNAc...) asparagine glycan. The chain crosses the membrane as a helical span at residues 56 to 76 (FYIGLGLAFLSSFLIGSSVIL). Over 77–102 (KKKGLLRLVATGATRAVDGGFGYLKD) the chain is Cytoplasmic. A helical membrane pass occupies residues 103–123 (AMWWAGFLTMAAGEVANFGAY). A124 is a topological domain (extracellular). A helical transmembrane segment spans residues 125-145 (FAPATVVTPLGALSVLISAIL). Residues 146–153 (SSYFLRES) are Cytoplasmic-facing. A helical membrane pass occupies residues 154–174 (LNLLGKLGCVICVAGSTVMVI). Over 175–195 (HAPEEEKVTTIMEMASKMKDT) the chain is Extracellular. A helical membrane pass occupies residues 196–216 (GFIVFAVLLLVSCLILIFVIA). Residues 217–223 (PRYGQRN) lie on the Cytoplasmic side of the membrane. The helical transmembrane segment at 224–244 (ILIYIIICSVIGAFSVAAVKG) threads the bilayer. Residues 245 to 261 (LGITIKNFFQGLPVVRH) are Extracellular-facing. The chain crosses the membrane as a helical span at residues 262 to 282 (PLPYILSLILALSLSTQVNFL). The Cytoplasmic segment spans residues 283-293 (NRALDIFNTSL). The helical transmembrane segment at 294–314 (VFPIYYVFFTTVVVTSSIILF) threads the bilayer. The Extracellular segment spans residues 315–324 (KEWYSMSAVD). A helical transmembrane segment spans residues 325–345 (IAGTLSGFVTIILGVFMLHAF). Over 346 to 404 (KDLDISCASLPHMHKNPPPSPAPEPTVIRLEDKNVLVDNIELASTSSPEEKPKVFIIHS) the chain is Cytoplasmic.

It belongs to the NIPA family. In terms of tissue distribution, highly expressed in brain, lung, stomach, keratinocytes and leukocytes, and in all other tissues tested except liver, thyroid and fetal brain.

Its subcellular location is the cell membrane. The enzyme catalyses Mg(2+)(in) = Mg(2+)(out). In terms of biological role, acts as a Mg(2+) transporter. Can also transport other divalent cations such as Ba(2+), Sr(2+) and Fe(2+) but to a much less extent than Mg(2+). May be a receptor for ligands (trioxilins A3 and B3) from the hepoxilin pathway. This chain is Magnesium transporter NIPA4 (NIPAL4), found in Homo sapiens (Human).